Consider the following 2079-residue polypeptide: von Willebrand factor A domain-containing protein DDB_G0286969 (2079 aa).

The 137-residue stretch at 11 to 147 folds into the VIT domain; sequence EQILPSFISI…ELEIIITYST (137 aa). A disordered region spans residues 178–203; sequence NENSTTNTNTQTQPQSVNTTTTTTPS. The segment covering 180 to 203 has biased composition (low complexity); that stretch reads NSTTNTNTQTQPQSVNTTTTTTPS. Residues 354-525 form the VWFA domain; that stretch reads ELIFLVDVSE…KVMRQLKRAL (172 aa). Disordered regions lie at residues 761–800, 832–866, 956–1139, 1155–1203, and 1239–1294; these read PTTL…LKTP, PFVP…TEVK, AKPV…TKPT, NEPA…VSST, and DSNT…ADAE. Composition is skewed to low complexity over residues 785–800, 841–866, and 956–973; these read TTQQ…LKTP, PTTT…TEVK, and AKPV…QQTK. Residues 923 to 957 adopt a coiled-coil conformation; sequence EMIKIAEAKAAAEQKAAAEQKAIADAKAAAEQAAK. The span at 974–989 shows a compositional bias: basic and acidic residues; that stretch reads PKADKQSKQNAKDNKQ. The span at 992–1006 shows a compositional bias: low complexity; the sequence is KPVVVEQKPPVVTET. Residues 1007 to 1021 are compositionally biased toward polar residues; that stretch reads KPTVATESATPTKPT. The span at 1023 to 1061 shows a compositional bias: low complexity; sequence AQAAAAAAAAAQQAAQQAAATTPVKQQPTKQTTPNKSTP. A compositionally biased stretch (basic and acidic residues) spans 1092–1111; that stretch reads KPVETKPVEQTKPVETKPVE. The span at 1176–1198 shows a compositional bias: low complexity; sequence NNNNNNNNNNNNNNNNNNNNNNN. Over residues 1239–1272 the composition is skewed to polar residues; that stretch reads DSNTKAPDSLKTTPIFSNGPQGISPSSGNGSNKS. Basic and acidic residues predominate over residues 1280–1292; sequence DRGGRGGRDRNAD. The 211-residue stretch at 1317-1527 folds into the MIF4G domain; it reads LKKFKFNLNR…LDLIDLRANK (211 aa). A disordered region spans residues 1530 to 1755; the sequence is PKNSTQTKTK…PAPVEPVKPK (226 aa). Basic and acidic residues-rich tracts occupy residues 1538 to 1550, 1557 to 1599, and 1621 to 1634; these read TKKD…ERFI, QKRE…RDAP, and NNRD…DRSG. 2 stretches are compositionally biased toward low complexity: residues 1635–1659 and 1688–1699; these read GKQS…LFGS and SSSIPSIPNRSN. Residues 1725–1740 are compositionally biased toward basic and acidic residues; that stretch reads SNDRDSRGPSKPDNRK. One can recognise an MI domain in the interval 1760–1882; it reads KIEDDISMTL…PLNYLEEAYA (123 aa).

In Dictyostelium discoideum (Social amoeba), this protein is von Willebrand factor A domain-containing protein DDB_G0286969.